The primary structure comprises 301 residues: Probable actin-related protein 2/3 complex subunit 2 (301 aa).

This sequence belongs to the ARPC2 family. As to quaternary structure, component of the Arp2/3 complex, at least composed of arx-1, arx-2, arx-4 and arx-6.

Its subcellular location is the cytoplasm. The protein localises to the cytoskeleton. Functions as actin-binding component of the Arp2/3 complex which is involved in regulation of actin polymerization and together with an activating nucleation-promoting factor (NPF) mediates the formation of branched actin networks. Seems to contact the mother actin filament. Plays a role in time-dependent memory loss and the retention of conditioned behavior over time. In Caenorhabditis elegans, this protein is Probable actin-related protein 2/3 complex subunit 2.